The following is a 179-amino-acid chain: Large ribosomal subunit protein uL5 (179 aa).

The protein belongs to the universal ribosomal protein uL5 family. In terms of assembly, part of the 50S ribosomal subunit; part of the 5S rRNA/L5/L18/L25 subcomplex. Contacts the 5S rRNA and the P site tRNA. Forms a bridge to the 30S subunit in the 70S ribosome.

Functionally, this is one of the proteins that bind and probably mediate the attachment of the 5S RNA into the large ribosomal subunit, where it forms part of the central protuberance. In the 70S ribosome it contacts protein S13 of the 30S subunit (bridge B1b), connecting the 2 subunits; this bridge is implicated in subunit movement. Contacts the P site tRNA; the 5S rRNA and some of its associated proteins might help stabilize positioning of ribosome-bound tRNAs. The polypeptide is Large ribosomal subunit protein uL5 (Francisella tularensis subsp. mediasiatica (strain FSC147)).